Consider the following 395-residue polypeptide: MWGLCKNHFPSNKIQVQERNKALKPKKSGSEHKTKQLFPVFNCKKKEKGVMIRFAILRNANTSLLSARSICLFTQAPTYCHVRLNTLNKSITTKRNSLTESKRHVHDGKHFFTTPHQQQQTKLGEIEEGHSPNIKGEDLRSIGQAITHQRNKRRKQIWSAIFGGIFGVILGYSLIYRVIYLKEQSFLPLFPSSKIRKLSSRDLKKVDVNQVQKLSKLRVLEILSGHDMIKEQYGVPLLDKDGNSPTLNEFSMWCEDQDPCVTGIVMEPDDKRDSSHTWYRIPFVCKWRITHRPISIRGTIDDLLNRIGLETSDLFEIISPERVYGSFKYEYPLQGDSHALHLWFHGEIELDDDSLIVYNGKYHVDVKLQEIDLFRREKNGQLVQYVLYKNEAGDK.

Residues 156 to 176 traverse the membrane as a helical segment; that stretch reads QIWSAIFGGIFGVILGYSLIY.

Belongs to the AIM39 family.

Its subcellular location is the mitochondrion membrane. In Saccharomyces cerevisiae (strain JAY291) (Baker's yeast), this protein is Altered inheritance of mitochondria protein 39, mitochondrial (AIM39).